The following is a 415-amino-acid chain: Protrudin (415 aa).

Positions 1–24 (MQTSDRDLSGPEASPSGMPEVLSE) are disordered. Residues 1–66 (MQTSDRDLSG…AGDGVRYLLR (66 aa)) lie on the Cytoplasmic side of the membrane. Residues 1-92 (MQTSDRDLSG…LFLTLNEGAW (92 aa)) form a sufficient for homooligomerization region. The segment at 1–210 (MQTSDRDLSG…LYLLPLCWVL (210 aa)) is sufficient for localization to endoplasmic reticulum tubular network and for interactions with REEP1, REEP5, ATL1, ATL2, ATL3 and SPAST. The segment at 51–64 (LEPLKDAGDGVRYL) is necessary for interaction with RAB11A and function in neurite outgrowth. The chain crosses the membrane as a helical span at residues 67–87 (WQMPLCSLLTCLGLNILFLTL). Residue N88 is a topological domain, lumenal. Residues 89 to 109 (EGAWYSMGALMISVPALLGYL) traverse the membrane as a helical segment. The Cytoplasmic portion of the chain corresponds to 110-192 (QEVCRGQLPE…NPVVSSQFYG (83 aa)). The helical intramembrane region spans 193-213 (ALLGMVCMLYLLPLCWVLALL). Over 214–415 (NSTLFLGNGD…CASCNQTLSK (202 aa)) the chain is Cytoplasmic. The interval 254–290 (QGAGGRGLLDSSPAPTPTEDLTPGSVEEAEEAEPDEE) is disordered. A necessary for interaction with KIF5A region spans residues 275–365 (TPGSVEEAEE…GCAATFSVLK (91 aa)). Residues 280 to 290 (EEAEEAEPDEE) show a composition bias toward acidic residues. The necessary for interaction with VAPA stretch occupies residues 290-296 (EFKDAIE). Residues 348–414 (TNNFGNCAGC…VCASCNQTLS (67 aa)) form an FYVE-type zinc finger. The Zn(2+) site is built by C354, C357, C370, C373, C378, C381, C406, and C409.

Can form homooligomers (monomers, dimers and tetramers). Interacts with RAB11A (GDP-bound form); regulates RAB11A. Interacts with FKBP8; may negatively regulate ZFYVE27 phosphorylation. Isoform 1 interacts to a greater extent than isoform 2 with VAPB (via MSP domain). Isoform 1 interacts to a greater extent than isoform 2 with VAPA (via MSP domain). Interaction with VAPA may regulate ZFYVE27 retention in the endoplasmic reticulum and its function in cell projections formation. Interacts with ATL2, ATL3, SPAST and RTN3. Interacts with REEP1, REEP5 and ATL1. Interacts with RAB11B (GDP-bound form), SURF4, KIF5B and KIF5C. Isoform 1 and 2 interact with KIFA. Post-translationally, phosphorylated. Phosphorylation is induced by NGF through the MAPK/ERK pathway and modulates interaction with RAB11A. Astrocytes express both isoform 1 and isoform 2 and oligodendrocytes express only isoform 2 (at protein level). Isoform 1 is expressed specifically in the central nervous system and selectively in neuronal cells. Isoform 2 is expressed in cerebrum, cerebellum, spinal cord, heart, thymus, spleen, intestine and lung.

Its subcellular location is the recycling endosome membrane. The protein localises to the endoplasmic reticulum membrane. It is found in the cell projection. It localises to the growth cone membrane. Its function is as follows. Key regulator of RAB11-dependent vesicular trafficking during neurite extension through polarized membrane transport. Promotes axonal elongation and contributes to the establishment of neuronal cell polarity. Involved in nerve growth factor-induced neurite formation in VAPA-dependent manner. Contributes to both the formation and stabilization of the tubular ER network. Involved in ER morphogenesis by regulating the sheet-to-tubule balance and possibly the density of tubule interconnections. Acts as an adapter protein that facilitates the interaction of KIF5A with VAPA, VAPB, SURF4, RAB11A, RAB11B and RTN3 and the ZFYVE27-KIF5A complex contributes to the transport of these proteins in neurons. Can induce formation of neurite-like membrane protrusions in non-neuronal cells in a KIF5A/B-dependent manner. This Mus musculus (Mouse) protein is Protrudin (Zfyve27).